A 57-amino-acid polypeptide reads, in one-letter code: UPF0391 membrane protein Patl_0263 (57 aa).

A run of 2 helical transmembrane segments spans residues 8–28 (FFVLGVIAAVFGFGGVIGVAA) and 30–50 (IAKVIFLLCVAFVVLFSVLAF).

This sequence belongs to the UPF0391 family.

The protein localises to the cell membrane. The sequence is that of UPF0391 membrane protein Patl_0263 from Pseudoalteromonas atlantica (strain T6c / ATCC BAA-1087).